Reading from the N-terminus, the 215-residue chain is NAD(P)H-hydrate epimerase (215 aa).

The 205-residue stretch at 8-212 folds into the YjeF N-terminal domain; sequence MYNIENKGHD…KIGIPPEAEE (205 aa). Residue 57-61 coordinates (6S)-NADPHX; that stretch reads NNGGD. The K(+) site is built by N58 and D124. (6S)-NADPHX contacts are provided by residues 128 to 134, Y139, and D157; that span reads GTGISGE. Residue S160 coordinates K(+).

The protein belongs to the NnrE/AIBP family. The cofactor is K(+).

The catalysed reaction is (6R)-NADHX = (6S)-NADHX. The enzyme catalyses (6R)-NADPHX = (6S)-NADPHX. In terms of biological role, catalyzes the epimerization of the S- and R-forms of NAD(P)HX, a damaged form of NAD(P)H that is a result of enzymatic or heat-dependent hydration. This is a prerequisite for the S-specific NAD(P)H-hydrate dehydratase to allow the repair of both epimers of NAD(P)HX. This chain is NAD(P)H-hydrate epimerase, found in Nitrosopumilus maritimus (strain SCM1).